Here is a 317-residue protein sequence, read N- to C-terminus: tRNA pseudouridine synthase B (317 aa).

Aspartate 47 serves as the catalytic Nucleophile.

It belongs to the pseudouridine synthase TruB family. Type 1 subfamily.

It carries out the reaction uridine(55) in tRNA = pseudouridine(55) in tRNA. Responsible for synthesis of pseudouridine from uracil-55 in the psi GC loop of transfer RNAs. This chain is tRNA pseudouridine synthase B, found in Shewanella sp. (strain MR-7).